We begin with the raw amino-acid sequence, 446 residues long: Histidine--tRNA ligase (446 aa).

Belongs to the class-II aminoacyl-tRNA synthetase family. As to quaternary structure, homodimer.

The protein localises to the cytoplasm. The enzyme catalyses tRNA(His) + L-histidine + ATP = L-histidyl-tRNA(His) + AMP + diphosphate + H(+). In Paraburkholderia phytofirmans (strain DSM 17436 / LMG 22146 / PsJN) (Burkholderia phytofirmans), this protein is Histidine--tRNA ligase.